The following is a 179-amino-acid chain: UPF0302 protein BPUM_1989 (179 aa).

Belongs to the UPF0302 family.

The polypeptide is UPF0302 protein BPUM_1989 (Bacillus pumilus (strain SAFR-032)).